The chain runs to 146 residues: Cytochrome c' (146 aa).

Positions 1-21 (MKLRIATIAGLVVLGSGFAVA) are cleaved as a signal peptide. Heme c contacts are provided by arginine 29, threonine 86, alanine 87, cysteine 134, cysteine 137, and histidine 138.

As to quaternary structure, monomer. In terms of processing, binds 1 heme c group covalently per subunit.

In terms of biological role, cytochrome c' is the most widely occurring bacterial c-type cytochrome. Cytochromes c' are high-spin proteins and the heme has no sixth ligand. Their exact function is not known. In Rhodopseudomonas palustris (strain ATCC BAA-98 / CGA009), this protein is Cytochrome c' (cycA).